Consider the following 136-residue polypeptide: Small ribosomal subunit protein uS19 (136 aa).

A disordered region spans residues 114-136; the sequence is RSRVSHGSAGVGATRSSKFVPLK.

Belongs to the universal ribosomal protein uS19 family.

Its function is as follows. Protein S19 forms a complex with S13 that binds strongly to the 16S ribosomal RNA. This chain is Small ribosomal subunit protein uS19, found in Methanosarcina acetivorans (strain ATCC 35395 / DSM 2834 / JCM 12185 / C2A).